The sequence spans 497 residues: Cysteine desulfurase, mitochondrial (497 aa).

Residues 1–33 constitute a mitochondrion transit peptide; sequence MLKSTATRSITRLSQVYNVPAATYRACLVSRRF. Pyridoxal 5'-phosphate is bound by residues 168–169, Asn-248, Gln-276, and 296–298; these read AT and SSH. Position 299 is an N6-(pyridoxal phosphate)lysine (Lys-299). Thr-336 serves as a coordination point for pyridoxal 5'-phosphate. Cys-421 (cysteine persulfide intermediate) is an active-site residue. Residue Cys-421 participates in [2Fe-2S] cluster binding.

This sequence belongs to the class-V pyridoxal-phosphate-dependent aminotransferase family. NifS/IscS subfamily. It depends on pyridoxal 5'-phosphate as a cofactor.

It is found in the mitochondrion. It catalyses the reaction (sulfur carrier)-H + L-cysteine = (sulfur carrier)-SH + L-alanine. Its function is as follows. Catalyzes the removal of elemental sulfur from cysteine to produce alanine. It supplies the inorganic sulfur for iron-sulfur (Fe-S) clusters. Plays a role in both tRNA-processing and mitochondrial metabolism. Involved in the 2-thio-modification of both 5-carboxymethylaminomethyl-2-thiouridine in mitochondrial tRNAs and 5-methoxycarbonylmethyl-2-thiouridine (mcm5s2U) in cytoplasmic tRNAs. The polypeptide is Cysteine desulfurase, mitochondrial (Saccharomyces cerevisiae (strain ATCC 204508 / S288c) (Baker's yeast)).